The sequence spans 279 residues: Thymidylate synthase (279 aa).

133-134 (RR) contacts dUMP. The active-site Nucleophile is C154. DUMP contacts are provided by residues 178 to 181 (RSND), N189, and 219 to 221 (HIY). D181 contributes to the (6R)-5,10-methylene-5,6,7,8-tetrahydrofolate binding site. A278 is a (6R)-5,10-methylene-5,6,7,8-tetrahydrofolate binding site.

It belongs to the thymidylate synthase family. Bacterial-type ThyA subfamily. As to quaternary structure, homodimer.

It localises to the cytoplasm. The enzyme catalyses dUMP + (6R)-5,10-methylene-5,6,7,8-tetrahydrofolate = 7,8-dihydrofolate + dTMP. The protein operates within pyrimidine metabolism; dTTP biosynthesis. Functionally, catalyzes the reductive methylation of 2'-deoxyuridine-5'-monophosphate (dUMP) to 2'-deoxythymidine-5'-monophosphate (dTMP) while utilizing 5,10-methylenetetrahydrofolate (mTHF) as the methyl donor and reductant in the reaction, yielding dihydrofolate (DHF) as a by-product. This enzymatic reaction provides an intracellular de novo source of dTMP, an essential precursor for DNA biosynthesis. The chain is Thymidylate synthase from Streptococcus pyogenes serotype M3 (strain SSI-1).